The sequence spans 213 residues: MSKFIVIEGLEGAGKSSAVRYVADYLHGHGVARIECTREPGGTPLAERMRAIVKEVHDERLTIEAELLLMYASRVQLVETRIKPALADGIWVVGDRHDLSSQAYQGGGRGIDANLIGAIKRAVLGDFKPDLTLYLDIDPAIGLQRARHRGELDRIELEQLSFFERTRQRYLELAAADESIKVIDAGQAPEQVKAAIEAALAHYLKDEPSCIPG.

9–16 (GLEGAGKS) serves as a coordination point for ATP.

The protein belongs to the thymidylate kinase family.

It catalyses the reaction dTMP + ATP = dTDP + ADP. Functionally, phosphorylation of dTMP to form dTDP in both de novo and salvage pathways of dTTP synthesis. In Aeromonas hydrophila subsp. hydrophila (strain ATCC 7966 / DSM 30187 / BCRC 13018 / CCUG 14551 / JCM 1027 / KCTC 2358 / NCIMB 9240 / NCTC 8049), this protein is Thymidylate kinase.